The following is a 256-amino-acid chain: UPF0280 protein MTH_727 (256 aa).

This sequence belongs to the UPF0280 family.

This is UPF0280 protein MTH_727 from Methanothermobacter thermautotrophicus (strain ATCC 29096 / DSM 1053 / JCM 10044 / NBRC 100330 / Delta H) (Methanobacterium thermoautotrophicum).